The primary structure comprises 209 residues: ATP-dependent Clp protease proteolytic subunit 2 (209 aa).

Residue Ser-106 is the Nucleophile of the active site. Residue His-131 is part of the active site.

The protein belongs to the peptidase S14 family. In terms of assembly, fourteen ClpP subunits assemble into 2 heptameric rings which stack back to back to give a disk-like structure with a central cavity, resembling the structure of eukaryotic proteasomes.

The protein localises to the cytoplasm. The enzyme catalyses Hydrolysis of proteins to small peptides in the presence of ATP and magnesium. alpha-casein is the usual test substrate. In the absence of ATP, only oligopeptides shorter than five residues are hydrolyzed (such as succinyl-Leu-Tyr-|-NHMec, and Leu-Tyr-Leu-|-Tyr-Trp, in which cleavage of the -Tyr-|-Leu- and -Tyr-|-Trp bonds also occurs).. In terms of biological role, cleaves peptides in various proteins in a process that requires ATP hydrolysis. Has a chymotrypsin-like activity. Plays a major role in the degradation of misfolded proteins. This chain is ATP-dependent Clp protease proteolytic subunit 2, found in Mesorhizobium japonicum (strain LMG 29417 / CECT 9101 / MAFF 303099) (Mesorhizobium loti (strain MAFF 303099)).